We begin with the raw amino-acid sequence, 166 residues long: Small ribosomal subunit protein uS3m (166 aa).

A mitochondrion-targeting transit peptide spans 1 to 25; that stretch reads MLRSLQHVESHINQCRRISTTSTLL.

It belongs to the universal ribosomal protein uS3 family. In terms of assembly, component of the mitochondrial ribosome small subunit (28S) which comprises a 12S rRNA and about 30 distinct proteins.

It localises to the mitochondrion. The sequence is that of Small ribosomal subunit protein uS3m (mrps-24) from Caenorhabditis briggsae.